A 177-amino-acid polypeptide reads, in one-letter code: Large ribosomal subunit protein uL6 (177 aa).

This sequence belongs to the universal ribosomal protein uL6 family. As to quaternary structure, part of the 50S ribosomal subunit.

Its function is as follows. This protein binds to the 23S rRNA, and is important in its secondary structure. It is located near the subunit interface in the base of the L7/L12 stalk, and near the tRNA binding site of the peptidyltransferase center. The chain is Large ribosomal subunit protein uL6 from Micrococcus luteus (strain ATCC 4698 / DSM 20030 / JCM 1464 / CCM 169 / CCUG 5858 / IAM 1056 / NBRC 3333 / NCIMB 9278 / NCTC 2665 / VKM Ac-2230) (Micrococcus lysodeikticus).